Consider the following 193-residue polypeptide: Holliday junction branch migration complex subunit RuvA (193 aa).

The domain I stretch occupies residues 1-64 (MIGRIAGILL…EDAHLLYGFL (64 aa)). Residues 65 to 139 (TPQERTTFRE…GKLGADLGAL (75 aa)) form a domain II region. Residues 139 to 143 (LAGAA) are flexible linker. The tract at residues 144-193 (SQSDHAADILNALVALGYSEKEGLAAIKNVPAGTGVSEGIKLALKALSKV) is domain III.

This sequence belongs to the RuvA family. In terms of assembly, homotetramer. Forms an RuvA(8)-RuvB(12)-Holliday junction (HJ) complex. HJ DNA is sandwiched between 2 RuvA tetramers; dsDNA enters through RuvA and exits via RuvB. An RuvB hexamer assembles on each DNA strand where it exits the tetramer. Each RuvB hexamer is contacted by two RuvA subunits (via domain III) on 2 adjacent RuvB subunits; this complex drives branch migration. In the full resolvosome a probable DNA-RuvA(4)-RuvB(12)-RuvC(2) complex forms which resolves the HJ.

It is found in the cytoplasm. In terms of biological role, the RuvA-RuvB-RuvC complex processes Holliday junction (HJ) DNA during genetic recombination and DNA repair, while the RuvA-RuvB complex plays an important role in the rescue of blocked DNA replication forks via replication fork reversal (RFR). RuvA specifically binds to HJ cruciform DNA, conferring on it an open structure. The RuvB hexamer acts as an ATP-dependent pump, pulling dsDNA into and through the RuvAB complex. HJ branch migration allows RuvC to scan DNA until it finds its consensus sequence, where it cleaves and resolves the cruciform DNA. The polypeptide is Holliday junction branch migration complex subunit RuvA (Burkholderia ambifaria (strain ATCC BAA-244 / DSM 16087 / CCUG 44356 / LMG 19182 / AMMD) (Burkholderia cepacia (strain AMMD))).